Here is an 86-residue protein sequence, read N- to C-terminus: Cell division topological specificity factor (86 aa).

It belongs to the MinE family.

Its function is as follows. Prevents the cell division inhibition by proteins MinC and MinD at internal division sites while permitting inhibition at polar sites. This ensures cell division at the proper site by restricting the formation of a division septum at the midpoint of the long axis of the cell. The protein is Cell division topological specificity factor of Rhizobium johnstonii (strain DSM 114642 / LMG 32736 / 3841) (Rhizobium leguminosarum bv. viciae).